Here is a 216-residue protein sequence, read N- to C-terminus: ATP phosphoribosyltransferase (216 aa).

This sequence belongs to the ATP phosphoribosyltransferase family. Short subfamily. As to quaternary structure, heteromultimer composed of HisG and HisZ subunits.

It is found in the cytoplasm. The enzyme catalyses 1-(5-phospho-beta-D-ribosyl)-ATP + diphosphate = 5-phospho-alpha-D-ribose 1-diphosphate + ATP. It functions in the pathway amino-acid biosynthesis; L-histidine biosynthesis; L-histidine from 5-phospho-alpha-D-ribose 1-diphosphate: step 1/9. Functionally, catalyzes the condensation of ATP and 5-phosphoribose 1-diphosphate to form N'-(5'-phosphoribosyl)-ATP (PR-ATP). Has a crucial role in the pathway because the rate of histidine biosynthesis seems to be controlled primarily by regulation of HisG enzymatic activity. This Synechococcus sp. (strain CC9902) protein is ATP phosphoribosyltransferase.